Here is a 476-residue protein sequence, read N- to C-terminus: Bifunctional protein HldE (476 aa).

The segment at 1 to 318 (MKPILPDYNN…AEAIHGSRDT (318 aa)) is ribokinase. 195 to 198 (NMSE) contacts ATP. The active site involves Asp264. Residues 344–476 (MTNGCFDILH…IIDAIKGGRG (133 aa)) are cytidylyltransferase.

The protein in the N-terminal section; belongs to the carbohydrate kinase PfkB family. It in the C-terminal section; belongs to the cytidylyltransferase family. In terms of assembly, homodimer.

The catalysed reaction is D-glycero-beta-D-manno-heptose 7-phosphate + ATP = D-glycero-beta-D-manno-heptose 1,7-bisphosphate + ADP + H(+). It carries out the reaction D-glycero-beta-D-manno-heptose 1-phosphate + ATP + H(+) = ADP-D-glycero-beta-D-manno-heptose + diphosphate. It participates in nucleotide-sugar biosynthesis; ADP-L-glycero-beta-D-manno-heptose biosynthesis; ADP-L-glycero-beta-D-manno-heptose from D-glycero-beta-D-manno-heptose 7-phosphate: step 1/4. Its pathway is nucleotide-sugar biosynthesis; ADP-L-glycero-beta-D-manno-heptose biosynthesis; ADP-L-glycero-beta-D-manno-heptose from D-glycero-beta-D-manno-heptose 7-phosphate: step 3/4. The protein operates within bacterial outer membrane biogenesis; LPS core biosynthesis. Its function is as follows. Catalyzes the phosphorylation of D-glycero-D-manno-heptose 7-phosphate at the C-1 position to selectively form D-glycero-beta-D-manno-heptose-1,7-bisphosphate. Functionally, catalyzes the ADP transfer from ATP to D-glycero-beta-D-manno-heptose 1-phosphate, yielding ADP-D-glycero-beta-D-manno-heptose. The chain is Bifunctional protein HldE from Vibrio vulnificus (strain CMCP6).